A 120-amino-acid chain; its full sequence is NAD(P)H-quinone oxidoreductase subunit 3 (120 aa).

3 consecutive transmembrane segments (helical) span residues 6–26 (GYDA…LALI), 64–84 (MFAL…PWAV), and 89–109 (LGVL…VALA).

The protein belongs to the complex I subunit 3 family. As to quaternary structure, NDH-1 can be composed of about 15 different subunits; different subcomplexes with different compositions have been identified which probably have different functions.

It localises to the cellular thylakoid membrane. The enzyme catalyses a plastoquinone + NADH + (n+1) H(+)(in) = a plastoquinol + NAD(+) + n H(+)(out). It catalyses the reaction a plastoquinone + NADPH + (n+1) H(+)(in) = a plastoquinol + NADP(+) + n H(+)(out). NDH-1 shuttles electrons from an unknown electron donor, via FMN and iron-sulfur (Fe-S) centers, to quinones in the respiratory and/or the photosynthetic chain. The immediate electron acceptor for the enzyme in this species is believed to be plastoquinone. Couples the redox reaction to proton translocation, and thus conserves the redox energy in a proton gradient. Cyanobacterial NDH-1 also plays a role in inorganic carbon-concentration. The polypeptide is NAD(P)H-quinone oxidoreductase subunit 3 (Parasynechococcus marenigrum (strain WH8102)).